The chain runs to 230 residues: TPR repeat-containing protein BB_0298 (230 aa).

TPR repeat units lie at residues 69–102 (ARFFNLIGLEFFKLGQYGPAIEYFAKNLEINPNN) and 183–216 (FEFLMLRGANYYSLGDLGNAILFYDKASKKASTE).

The polypeptide is TPR repeat-containing protein BB_0298 (Borreliella burgdorferi (strain ATCC 35210 / DSM 4680 / CIP 102532 / B31) (Borrelia burgdorferi)).